The following is a 106-amino-acid chain: Urease subunit beta (106 aa).

It belongs to the urease beta subunit family. In terms of assembly, heterotrimer of UreA (gamma), UreB (beta) and UreC (alpha) subunits. Three heterotrimers associate to form the active enzyme.

Its subcellular location is the cytoplasm. It carries out the reaction urea + 2 H2O + H(+) = hydrogencarbonate + 2 NH4(+). Its pathway is nitrogen metabolism; urea degradation; CO(2) and NH(3) from urea (urease route): step 1/1. The protein is Urease subunit beta of Prochlorococcus marinus (strain MIT 9312).